Here is a 130-residue protein sequence, read N- to C-terminus: MSRTESREHAIQILFQIENEAHEISVEDATRFIVEPPNRDVFADELVHGVISKQNELDDKITPHLKSWALERLNKIDRIILRLSAFELLYTDAPEKVIVNEAVNLAKKFSDDESYKFINGVLSEIIKNKA.

Belongs to the NusB family.

Its function is as follows. Involved in transcription antitermination. Required for transcription of ribosomal RNA (rRNA) genes. Binds specifically to the boxA antiterminator sequence of the ribosomal RNA (rrn) operons. The sequence is that of Transcription antitermination protein NusB from Macrococcus caseolyticus (strain JCSC5402) (Macrococcoides caseolyticum).